We begin with the raw amino-acid sequence, 249 residues long: Triosephosphate isomerase (249 aa).

Residue Asn8–Lys10 participates in substrate binding. His95 (electrophile) is an active-site residue. Glu166 serves as the catalytic Proton acceptor. Residues Gly172, Ser211, and Gly232 to Gly233 contribute to the substrate site.

The protein belongs to the triosephosphate isomerase family. In terms of assembly, homodimer.

It localises to the cytoplasm. The enzyme catalyses D-glyceraldehyde 3-phosphate = dihydroxyacetone phosphate. It participates in carbohydrate biosynthesis; gluconeogenesis. The protein operates within carbohydrate degradation; glycolysis; D-glyceraldehyde 3-phosphate from glycerone phosphate: step 1/1. Involved in the gluconeogenesis. Catalyzes stereospecifically the conversion of dihydroxyacetone phosphate (DHAP) to D-glyceraldehyde-3-phosphate (G3P). This chain is Triosephosphate isomerase, found in Granulibacter bethesdensis (strain ATCC BAA-1260 / CGDNIH1).